The sequence spans 500 residues: Lysine--tRNA ligase (500 aa).

Mg(2+)-binding residues include Glu-410 and Glu-417.

This sequence belongs to the class-II aminoacyl-tRNA synthetase family. In terms of assembly, homodimer. Requires Mg(2+) as cofactor.

Its subcellular location is the cytoplasm. The catalysed reaction is tRNA(Lys) + L-lysine + ATP = L-lysyl-tRNA(Lys) + AMP + diphosphate. In Mycoplasma mycoides subsp. mycoides SC (strain CCUG 32753 / NCTC 10114 / PG1), this protein is Lysine--tRNA ligase.